The chain runs to 326 residues: uncharacterized protein (326 aa).

This is an uncharacterized protein from Escherichia coli (strain K12).